We begin with the raw amino-acid sequence, 364 residues long: 3-isopropylmalate dehydrogenase (364 aa).

78 to 89 (GPKWGTGAVRPE) is an NAD(+) binding site. Residues Arg96, Arg106, Arg135, and Asp224 each contribute to the substrate site. Residues Asp224, Asp249, and Asp253 each contribute to the Mg(2+) site. 288–299 (GSAPDLPANKVN) contacts NAD(+).

Belongs to the isocitrate and isopropylmalate dehydrogenases family. Homodimer. Mg(2+) is required as a cofactor. It depends on Mn(2+) as a cofactor.

It localises to the cytoplasm. The enzyme catalyses (2R,3S)-3-isopropylmalate + NAD(+) = 4-methyl-2-oxopentanoate + CO2 + NADH. It participates in amino-acid biosynthesis; L-leucine biosynthesis; L-leucine from 3-methyl-2-oxobutanoate: step 3/4. Functionally, catalyzes the oxidation of 3-carboxy-2-hydroxy-4-methylpentanoate (3-isopropylmalate) to 3-carboxy-4-methyl-2-oxopentanoate. The product decarboxylates to 4-methyl-2 oxopentanoate. The sequence is that of 3-isopropylmalate dehydrogenase (LEU2) from Wickerhamomyces anomalus (strain ATCC 8168 / CBS 5759 / DSM 6766 / JCM 3585 / IAM 12210 / NCYC 432 / NBRC 10213 / NRRL Y-366 / AJ 5027) (Yeast).